A 397-amino-acid polypeptide reads, in one-letter code: Mitochondrial inner membrane magnesium transporter LPE10 (397 aa).

The N-terminal 48 residues, 1–48 (MLFIRQLSVIPKAPAFAKFFHTAGLVRQKLSDPNHLAILLQKNLAQRN), are a transit peptide targeting the mitochondrion. The helical transmembrane segment at 318-338 (LMLLGLRFSIGLLSLAGSIFI) threads the bilayer. The YGMN motif lies at 342 to 345 (YGMN). Residues 355 to 375 (VGFPVVSTLGVILMAYLFAFS) traverse the membrane as a helical segment.

This sequence belongs to the CorA metal ion transporter (MIT) (TC 1.A.35) family. As to quaternary structure, forms homooligomers. Interacts with MRS2.

Its subcellular location is the mitochondrion inner membrane. Functionally, mitochondrial inner membrane magnesium transporter required for mitochondrial magnesium homeostasis. Modulates the conductance of the MRS2 channel. Involved in the splicing of mRNA group II introns in mitochondria by affecting mitochondrial magnesium concentrations, which are critical for group II intron splicing. The protein is Mitochondrial inner membrane magnesium transporter LPE10 (LPE10) of Kluyveromyces lactis (strain ATCC 8585 / CBS 2359 / DSM 70799 / NBRC 1267 / NRRL Y-1140 / WM37) (Yeast).